A 181-amino-acid chain; its full sequence is Mating-type M-specific polypeptide Mc (181 aa).

Residues 103–171 constitute a DNA-binding region (HMG box); the sequence is TPRPPNAFIL…QHQKMYPGYK (69 aa).

It localises to the nucleus. Its function is as follows. Mating type proteins are sequence specific DNA-binding proteins that act as master switches in yeast differentiation by controlling gene expression in a cell type-specific fashion. Positive regulator of MFM genes. The HMG box recognizes the DNA sequence 5'-AACAAAG-3'. Required for conjugation and efficient meiosis. This Schizosaccharomyces kambucha (Fission yeast) protein is Mating-type M-specific polypeptide Mc (matMc).